The primary structure comprises 309 residues: Dihydroorotate dehydrogenase B (NAD(+)), catalytic subunit (309 aa).

FMN is bound by residues serine 21 and 45-46 (KA). Substrate contacts are provided by residues lysine 45 and 69 to 73 (NAIGL). FMN is bound by residues asparagine 99 and asparagine 127. Asparagine 127 contributes to the substrate binding site. Catalysis depends on cysteine 130, which acts as the Nucleophile. FMN-binding residues include lysine 165 and isoleucine 191. 192-193 (NT) contributes to the substrate binding site. Residues glycine 217, 243-244 (GG), and 265-266 (GT) each bind FMN.

It belongs to the dihydroorotate dehydrogenase family. Type 1 subfamily. As to quaternary structure, heterotetramer of 2 PyrK and 2 PyrD type B subunits. Requires FMN as cofactor.

It localises to the cytoplasm. It catalyses the reaction (S)-dihydroorotate + NAD(+) = orotate + NADH + H(+). The protein operates within pyrimidine metabolism; UMP biosynthesis via de novo pathway; orotate from (S)-dihydroorotate (NAD(+) route): step 1/1. Its function is as follows. Catalyzes the conversion of dihydroorotate to orotate with NAD(+) as electron acceptor. The chain is Dihydroorotate dehydrogenase B (NAD(+)), catalytic subunit (pyrD) from Bacillus cereus (strain B4264).